Here is a 215-residue protein sequence, read N- to C-terminus: Uracil phosphoribosyltransferase (215 aa).

Position 30–34 (30–34 (KGMVR)) interacts with GTP. Residues arginine 80, arginine 105, and 139-147 (DPMIATAST) each bind 5-phospho-alpha-D-ribose 1-diphosphate. Residues isoleucine 202 and 207–209 (GDA) each bind uracil. Aspartate 208 contacts 5-phospho-alpha-D-ribose 1-diphosphate.

Belongs to the UPRTase family. Mg(2+) is required as a cofactor.

The enzyme catalyses UMP + diphosphate = 5-phospho-alpha-D-ribose 1-diphosphate + uracil. It participates in pyrimidine metabolism; UMP biosynthesis via salvage pathway; UMP from uracil: step 1/1. With respect to regulation, allosterically activated by GTP. In terms of biological role, catalyzes the conversion of uracil and 5-phospho-alpha-D-ribose 1-diphosphate (PRPP) to UMP and diphosphate. The protein is Uracil phosphoribosyltransferase of Metallosphaera sedula (strain ATCC 51363 / DSM 5348 / JCM 9185 / NBRC 15509 / TH2).